The primary structure comprises 249 residues: Chitooligosaccharide deacetylase (249 aa).

Residues histidine 61 and histidine 125 each contribute to the Mg(2+) site.

Belongs to the YdjC deacetylase family. ChbG subfamily. Homodimer. Mg(2+) is required as a cofactor.

Its subcellular location is the cytoplasm. It carries out the reaction N,N'-diacetylchitobiose + H2O = N-acetyl-beta-D-glucosaminyl-(1-&gt;4)-D-glucosamine + acetate. The catalysed reaction is diacetylchitobiose-6'-phosphate + H2O = N'-monoacetylchitobiose-6'-phosphate + acetate. Its pathway is glycan degradation; chitin degradation. In terms of biological role, involved in the degradation of chitin. ChbG is essential for growth on the acetylated chitooligosaccharides chitobiose and chitotriose but is dispensable for growth on cellobiose and chitosan dimer, the deacetylated form of chitobiose. Deacetylation of chitobiose-6-P and chitotriose-6-P is necessary for both the activation of the chb promoter by the regulatory protein ChbR and the hydrolysis of phosphorylated beta-glucosides by the phospho-beta-glucosidase ChbF. Catalyzes the removal of only one acetyl group from chitobiose-6-P to yield monoacetylchitobiose-6-P, the inducer of ChbR and the substrate of ChbF. The chain is Chitooligosaccharide deacetylase from Escherichia coli O17:K52:H18 (strain UMN026 / ExPEC).